We begin with the raw amino-acid sequence, 367 residues long: Ferrochelatase (367 aa).

Positions 226 and 307 each coordinate Fe cation.

Belongs to the ferrochelatase family.

Its subcellular location is the cytoplasm. It carries out the reaction heme b + 2 H(+) = protoporphyrin IX + Fe(2+). Its pathway is porphyrin-containing compound metabolism; protoheme biosynthesis; protoheme from protoporphyrin-IX: step 1/1. Its function is as follows. Catalyzes the ferrous insertion into protoporphyrin IX. The chain is Ferrochelatase from Burkholderia pseudomallei (strain 1106a).